A 339-amino-acid chain; its full sequence is Deubiquitinase and deneddylase Dub2 (339 aa).

Residues 36-56 (IIIALFLIVISCGLILCAYTF) traverse the membrane as a helical segment. Residues histidine 203, aspartate 220, and cysteine 282 contribute to the active site.

Belongs to the peptidase C48 family.

It localises to the secreted. Its subcellular location is the host cell. The protein resides in the membrane. Its function is as follows. Effector proteins function to alter host cell physiology and promote bacterial survival in host tissues. This protease possesses deubiquitinating and deneddylating activities. The chain is Deubiquitinase and deneddylase Dub2 (cdu2) from Chlamydia trachomatis serovar D (strain ATCC VR-885 / DSM 19411 / UW-3/Cx).